The chain runs to 406 residues: Phosphopentomutase (406 aa).

6 residues coordinate Mn(2+): Asp-10, Asp-305, His-310, Asp-346, His-347, and His-358.

The protein belongs to the phosphopentomutase family. Mn(2+) is required as a cofactor.

The protein resides in the cytoplasm. The enzyme catalyses 2-deoxy-alpha-D-ribose 1-phosphate = 2-deoxy-D-ribose 5-phosphate. It carries out the reaction alpha-D-ribose 1-phosphate = D-ribose 5-phosphate. It functions in the pathway carbohydrate degradation; 2-deoxy-D-ribose 1-phosphate degradation; D-glyceraldehyde 3-phosphate and acetaldehyde from 2-deoxy-alpha-D-ribose 1-phosphate: step 1/2. Functionally, isomerase that catalyzes the conversion of deoxy-ribose 1-phosphate (dRib-1-P) and ribose 1-phosphate (Rib-1-P) to deoxy-ribose 5-phosphate (dRib-5-P) and ribose 5-phosphate (Rib-5-P), respectively. This chain is Phosphopentomutase, found in Sinorhizobium fredii (strain NBRC 101917 / NGR234).